A 312-amino-acid polypeptide reads, in one-letter code: Methionyl-tRNA formyltransferase (312 aa).

Residue 111–114 (SLLP) coordinates (6S)-5,6,7,8-tetrahydrofolate.

Belongs to the Fmt family.

The catalysed reaction is L-methionyl-tRNA(fMet) + (6R)-10-formyltetrahydrofolate = N-formyl-L-methionyl-tRNA(fMet) + (6S)-5,6,7,8-tetrahydrofolate + H(+). Functionally, attaches a formyl group to the free amino group of methionyl-tRNA(fMet). The formyl group appears to play a dual role in the initiator identity of N-formylmethionyl-tRNA by promoting its recognition by IF2 and preventing the misappropriation of this tRNA by the elongation apparatus. In Rhodopseudomonas palustris (strain HaA2), this protein is Methionyl-tRNA formyltransferase.